The sequence spans 136 residues: Ribonuclease VapC47 (136 aa).

The region spanning 2–104 (IYMDTSALTK…AIHLAAAAQI (103 aa)) is the PINc domain. Mg(2+) contacts are provided by Asp-5 and Asp-94.

Belongs to the PINc/VapC protein family. Requires Mg(2+) as cofactor.

Toxic component of a type II toxin-antitoxin (TA) system. An RNase. Its toxic effect on colony formation is neutralized by coexpression with cognate antitoxin VapB47. This chain is Ribonuclease VapC47, found in Mycobacterium tuberculosis (strain CDC 1551 / Oshkosh).